The following is a 407-amino-acid chain: Tyrosine--tRNA ligase (407 aa).

Residue tyrosine 36 coordinates L-tyrosine. The 'HIGH' region signature appears at 41-50; the sequence is PTADSLHIGH. The L-tyrosine site is built by tyrosine 169 and glutamine 173. The 'KMSKS' region motif lies at 229–233; it reads KMGKT. An ATP-binding site is contributed by lysine 232. Residues 341–407 form the S4 RNA-binding domain; the sequence is KGILDILVET…KKSYNRIVIE (67 aa).

It belongs to the class-I aminoacyl-tRNA synthetase family. TyrS type 1 subfamily. As to quaternary structure, homodimer.

The protein resides in the cytoplasm. The catalysed reaction is tRNA(Tyr) + L-tyrosine + ATP = L-tyrosyl-tRNA(Tyr) + AMP + diphosphate + H(+). Functionally, catalyzes the attachment of tyrosine to tRNA(Tyr) in a two-step reaction: tyrosine is first activated by ATP to form Tyr-AMP and then transferred to the acceptor end of tRNA(Tyr). The polypeptide is Tyrosine--tRNA ligase (Clostridium tetani (strain Massachusetts / E88)).